A 244-amino-acid chain; its full sequence is 5-oxoprolinase subunit A (244 aa).

This sequence belongs to the LamB/PxpA family. As to quaternary structure, forms a complex composed of PxpA, PxpB and PxpC.

The enzyme catalyses 5-oxo-L-proline + ATP + 2 H2O = L-glutamate + ADP + phosphate + H(+). Its function is as follows. Catalyzes the cleavage of 5-oxoproline to form L-glutamate coupled to the hydrolysis of ATP to ADP and inorganic phosphate. The sequence is that of 5-oxoprolinase subunit A from Salmonella arizonae (strain ATCC BAA-731 / CDC346-86 / RSK2980).